Reading from the N-terminus, the 675-residue chain is Nexilin (675 aa).

Residues 1–66 (MNDISQKAEI…RKEQYIRERE (66 aa)) form a disordered region. K16 carries the post-translational modification Phosphoserine. A compositionally biased stretch (basic and acidic residues) spans 27–66 (GKGDVKDKFEAMQRAREERNQRRSRDEKQRRKEQYIRERE). At S80 the chain carries Phosphoserine. The tract at residues 105-127 (RFAEMEKQRQEEQRKRTEEERKR) is disordered. Residue S241 is modified to Phosphoserine. 2 disordered regions span residues 254-278 (LERQ…EEEK) and 313-336 (SFEE…ARRR). Residues S357 and S365 each carry the phosphoserine modification. A Phosphothreonine modification is found at T370. Disordered regions lie at residues 487-513 (ENFH…KVNM) and 551-584 (LQKK…APWF). 2 positions are modified to phosphoserine: S564 and S569. The Ig-like domain maps to 582–670 (PWFKKPLKNT…GSAASTCILT (89 aa)).

Interacts with F-actin. In terms of tissue distribution, abundantly expressed in heart and skeletal muscle, and at lower levels in placenta, lung, liver and pancreas. Also expressed in HeLaS3 and MOLT-4 cell lines.

The protein localises to the cytoplasm. Its subcellular location is the cytoskeleton. It is found in the cell junction. The protein resides in the adherens junction. It localises to the myofibril. The protein localises to the sarcomere. Its subcellular location is the z line. Involved in regulating cell migration through association with the actin cytoskeleton. Has an essential role in the maintenance of Z line and sarcomere integrity. This chain is Nexilin, found in Homo sapiens (Human).